Consider the following 37-residue polypeptide: Large ribosomal subunit protein bL36A (37 aa).

The protein belongs to the bacterial ribosomal protein bL36 family.

The sequence is that of Large ribosomal subunit protein bL36A from Haemophilus ducreyi (strain 35000HP / ATCC 700724).